A 360-amino-acid polypeptide reads, in one-letter code: Phosphoserine aminotransferase (360 aa).

Residue Arg42 participates in L-glutamate binding. Pyridoxal 5'-phosphate contacts are provided by residues 76–77, Trp102, Thr152, Asp172, and Gln195; that span reads AS. Position 196 is an N6-(pyridoxal phosphate)lysine (Lys196). 237–238 contributes to the pyridoxal 5'-phosphate binding site; sequence NT.

The protein belongs to the class-V pyridoxal-phosphate-dependent aminotransferase family. SerC subfamily. In terms of assembly, homodimer. Pyridoxal 5'-phosphate is required as a cofactor.

The protein localises to the cytoplasm. The enzyme catalyses O-phospho-L-serine + 2-oxoglutarate = 3-phosphooxypyruvate + L-glutamate. The catalysed reaction is 4-(phosphooxy)-L-threonine + 2-oxoglutarate = (R)-3-hydroxy-2-oxo-4-phosphooxybutanoate + L-glutamate. The protein operates within amino-acid biosynthesis; L-serine biosynthesis; L-serine from 3-phospho-D-glycerate: step 2/3. Its function is as follows. Catalyzes the reversible conversion of 3-phosphohydroxypyruvate to phosphoserine and of 3-hydroxy-2-oxo-4-phosphonooxybutanoate to phosphohydroxythreonine. The protein is Phosphoserine aminotransferase of Bacillus cereus (strain ZK / E33L).